A 122-amino-acid polypeptide reads, in one-letter code: Large ribosomal subunit protein uL14 (122 aa).

The protein belongs to the universal ribosomal protein uL14 family. Part of the 50S ribosomal subunit. Forms a cluster with proteins L3 and L19. In the 70S ribosome, L14 and L19 interact and together make contacts with the 16S rRNA in bridges B5 and B8.

In terms of biological role, binds to 23S rRNA. Forms part of two intersubunit bridges in the 70S ribosome. This is Large ribosomal subunit protein uL14 from Thermosynechococcus vestitus (strain NIES-2133 / IAM M-273 / BP-1).